We begin with the raw amino-acid sequence, 255 residues long: Increased copper sensitivity protein 2 (255 aa).

Residues 1–12 (MGKFEQKERERI) show a composition bias toward basic and acidic residues. Disordered regions lie at residues 1 to 32 (MGKF…KSLG) and 82 to 142 (PGDK…RKSH). Positions 13 to 30 (STFSFPTTGSQSSTSIKS) are enriched in polar residues. Residues 131 to 142 (SGRRKSYHRKSH) are compositionally biased toward basic residues. A Phosphoserine modification is found at Ser-217.

In Saccharomyces cerevisiae (strain ATCC 204508 / S288c) (Baker's yeast), this protein is Increased copper sensitivity protein 2 (ICS2).